Here is a 111-residue protein sequence, read N- to C-terminus: ATP synthase subunit c (111 aa).

Helical transmembrane passes span 38 to 58 (GLGV…GSGL) and 89 to 109 (AGIA…LIFV).

The protein belongs to the ATPase C chain family. F-type ATPases have 2 components, F(1) - the catalytic core - and F(0) - the membrane proton channel. F(1) has five subunits: alpha(3), beta(3), gamma(1), delta(1), epsilon(1). F(0) has three main subunits: a(1), b(2) and c(10-14). The alpha and beta chains form an alternating ring which encloses part of the gamma chain. F(1) is attached to F(0) by a central stalk formed by the gamma and epsilon chains, while a peripheral stalk is formed by the delta and b chains.

The protein resides in the cell membrane. Its function is as follows. F(1)F(0) ATP synthase produces ATP from ADP in the presence of a proton or sodium gradient. F-type ATPases consist of two structural domains, F(1) containing the extramembraneous catalytic core and F(0) containing the membrane proton channel, linked together by a central stalk and a peripheral stalk. During catalysis, ATP synthesis in the catalytic domain of F(1) is coupled via a rotary mechanism of the central stalk subunits to proton translocation. Key component of the F(0) channel; it plays a direct role in translocation across the membrane. A homomeric c-ring of between 10-14 subunits forms the central stalk rotor element with the F(1) delta and epsilon subunits. This is ATP synthase subunit c from Mycoplasmopsis synoviae (strain 53) (Mycoplasma synoviae).